The chain runs to 228 residues: Ribosomal RNA small subunit methyltransferase G (228 aa).

Residues glycine 82, leucine 87, 105 to 107, 133 to 134, and arginine 147 contribute to the S-adenosyl-L-methionine site; these read DAT and VE.

It belongs to the methyltransferase superfamily. RNA methyltransferase RsmG family.

It is found in the cytoplasm. Specifically methylates the N7 position of a guanine in 16S rRNA. This is Ribosomal RNA small subunit methyltransferase G from Pelodictyon phaeoclathratiforme (strain DSM 5477 / BU-1).